The following is a 537-amino-acid chain: GTPase LSG1-1 (537 aa).

In terms of domain architecture, CP-type G spans 158–362 (WRQLWRVLER…LCDCPGLVFP (205 aa)). The DARXP motif signature appears at 176-180 (DARDP). Residues 206-209 (NKAD) form a G4 region. Position 206–209 (206–209 (NKAD)) interacts with GTP. The tract at residues 234 to 236 (SAK) is G5. Residues 311 to 318 (GYPNVGKS) form a G1 region. 314 to 319 (NVGKSS) contributes to the GTP binding site. The tract at residues 337–341 (GKTKH) is G2. Positions 355-358 (DCPG) are G3. Glycine 358 contributes to the GTP binding site. Residues 484-508 (LGAETREGSQTEKKGEEAPSLGLDQ) are disordered. The span at 487–500 (ETREGSQTEKKGEE) shows a compositional bias: basic and acidic residues.

Belongs to the TRAFAC class YlqF/YawG GTPase family. As to expression, ubiquitous, with the highest expression in stem and hypsophyll on day 66.

It is found in the cytoplasm. Its function is as follows. GTPase that might be redundant with LSG1-2 for ribosome biogenesis. Binds to 23S rRNA. This chain is GTPase LSG1-1, found in Arabidopsis thaliana (Mouse-ear cress).